The chain runs to 815 residues: Phosphate transporter PHO1-2 (815 aa).

Over 1-421 (MVKFSREYEA…QQPRNTHMIT (421 aa)) the chain is Cytoplasmic. The 367-residue stretch at 2–368 (VKFSREYEAS…EQQRATDLFS (367 aa)) folds into the SPX domain. Disordered regions lie at residues 83-108 (SAGQ…STDK), 166-213 (RGLA…LELQ), and 242-266 (AGKK…GGGG). Positions 97-108 (PDRGELVRSTDK) are enriched in basic and acidic residues. Positions 183-201 (PPSSVHGSSGRYLLSGLSS) are enriched in low complexity. The segment covering 202 to 213 (PQSMSDGSLELQ) has biased composition (polar residues). Basic and acidic residues predominate over residues 243–254 (GKKDGKTKDGSG). Over residues 255–266 (KGRGGGGGGGGG) the composition is skewed to gly residues. A helical transmembrane segment spans residues 422-442 (FLVGLFTGTFVSLFIIYAILA). Residues 443–458 (HVSGIFTSTGNSAYME) lie on the Extracellular side of the membrane. The chain crosses the membrane as a helical span at residues 459–479 (IVYHVFSMFALISLHIFLYGC). The Cytoplasmic segment spans residues 480–508 (NLFMWKNTRINHNFIFDFSSNTALTHRDA). The helical transmembrane segment at 509–529 (FLMSASIMCTVVAALVINLFL) threads the bilayer. Topologically, residues 530–538 (KNAGVAYAN) are extracellular. A helical transmembrane segment spans residues 539–559 (ALPGALLLLSTGVLFCPFDIF). At 560 to 686 (YRSTRYCFMR…VRFKYAATPT (127 aa)) the chain is on the cytoplasmic side. In terms of domain architecture, EXS spans 624-815 (TSGQQYKHLA…PLPFRELETD (192 aa)). Residues 687 to 707 (PFWVWMVIISSSGATIYQLYW) traverse the membrane as a helical segment. Topologically, residues 708 to 734 (DFVKDWGFLNPKSKNRWLRNELILKNK) are extracellular. A helical transmembrane segment spans residues 735–751 (SIYYVSMMLNLALRLAW). Residues 752–815 (TESVMKIHIG…PLPFRELETD (64 aa)) lie on the Cytoplasmic side of the membrane.

The protein belongs to the SYG1 (TC 2.A.94) family. In terms of tissue distribution, specifically expressed in roots.

It localises to the cell membrane. Its function is as follows. Involved in the transfer of inorganic phosphate (Pi) from roots to shoots. The polypeptide is Phosphate transporter PHO1-2 (PHO1-2) (Oryza sativa subsp. japonica (Rice)).